The following is a 917-amino-acid chain: MKKLVKSAVVFAGLVFIGTSATMITEKASAASTDPVQKVDGQATYIPKGVRDGTATEEHDGFEDGTNSVLQQVPLLRATTGYPDVNAYIKSNKFSTAKIEKQLKSQFPKFNYRNGYGKPEGIVIHETANNSSTITGEINYMSTNYNNAFVHAFVDKSRIIQIHPTENGVWGAGQYANARFIQVELVRSKTFDEFARSINNYAYYAAYLLDQYNLPVDSAHSDGKGTVWSHDAVTRYLGGTTHTDPVAYFNQWGYNFNNFVSLINEKYKAMQVNYEKIEYDKAITAYSRVKTATGNSVWTKPNKTEGAKLVNPLSSYSGKNLRIIREAKTSGGTIWYQFSVGGKTIGWVDSKALNTFYTPSMEKTITGTRYVLPSKQTVHYYGLPVEDSAIDRGPLSKFNGQALTLQREATIEGQLWYRVKDLGWVKAVNLTTTKYDLIEYDKAITAYSRVKTAAGNYVWSKPNKTEGAKQGSALSTYSGKNMRIIREAKTSSGTIWYQFSIDGKTIGWVDTKALNTFYTPSMEKNLTATRYVAPGQETQHYYGLPVADSAIDRGPLSKFAGQTLTVQREATIEGQLWYRVKDLGWTKASTLTATQYDKLEYDKAITAYSRVKTATGNSVWTKPYRTSGYKLVNPLSSYAGKNLRIIREAKTSSGIWYQFSVGGKTIGWVDSKALNTFYTPSMEKTITGTRYVLPSKQTVHYYGLPVEDSAIDRGPLSKFNGQALTLQREATIEGQLWYRVKDLGWVKAANLTTTKYDTLSYDKAITAYSRVKTATGNSVWTKPNKIEGAQKISALSTYSGKNMRILREAKTSSGTIWYQFSVGGKTIGWVETKALNTFYTPSMEKNLTATRYVLTSKKNEHYYGLPVVDSAIDRGPLSKFSGKTLTVQREATIEGQLWYRVKDLGWTKAANLSAKKQ.

A signal peptide spans 1–30 (MKKLVKSAVVFAGLVFIGTSATMITEKASA). An N-acetylmuramoyl-L-alanine amidase domain is found at 118–245 (KPEGIVIHET…YLGGTTHTDP (128 aa)). Residues 262-917 (LINEKYKAMQ…KAANLSAKKQ (656 aa)) form a GW repeat region, necessary and sufficient for cell surface attachment region. 8 GW domains span residues 279–358 (YDKA…TFYT), 361–435 (MEKT…TTKY), 440–519 (YDKA…TFYT), 522–596 (MEKN…ATQY), 601–679 (YDKA…TFYT), 682–756 (MEKT…TTKY), 761–840 (YDKA…TFYT), and 843–917 (MEKN…AKKQ).

The protein in the N-terminal section; belongs to the N-acetylmuramoyl-L-alanine amidase 2 family.

It localises to the cell surface. It is found in the cell membrane. In terms of biological role, a bacteriolysin able to lyse both L.monocytogenes and S.aureus. The chain is Protein Ami from Listeria monocytogenes serotype 1/2a (strain EGD / Mackaness).